The following is a 686-amino-acid chain: Chondroitin synthase (686 aa).

Positions 130–417 (YVWAGKRKEL…LLQQKVPYFY (288 aa)) are galactosaminyltransferase; A1 domain. UDP-N-acetyl-alpha-D-galactosamine is bound by residues Pro-157, Arg-161, Asp-188, Tyr-217, Arg-223, and 239–240 (DC). Asp-241 contributes to the Mn(2+) binding site. A UDP-N-acetyl-alpha-D-galactosamine-binding site is contributed by 361–362 (ED). His-386 is a Mn(2+) binding site. The interval 418–682 (RKKEKIESAT…ECRKYTWEKI (265 aa)) is glucuronosyltransferase; A2 domain. Residues Tyr-441, Asp-469, and 517 to 520 (QLDS) contribute to the UDP-alpha-D-glucuronate site. Residue Asp-521 participates in Mn(2+) binding. UDP-alpha-D-glucuronate is bound by residues His-581 and 603-604 (AV). Residue His-631 participates in Mn(2+) binding.

Belongs to the glycosyltransferase 2 family. CS/HAS subfamily. The cofactor is Mn(2+).

It catalyses the reaction 3-O-(beta-D-GlcA-(1-&gt;3)-beta-D-GalNAc-(1-&gt;4)-beta-D-GlcA-(1-&gt;3)-beta-D-Gal-(1-&gt;3)-beta-D-Gal-(1-&gt;4)-beta-D-Xyl)-L-seryl-[protein] + UDP-N-acetyl-alpha-D-galactosamine = 3-O-(beta-D-GalNAc-(1-&gt;4)-beta-D-GlcA-(1-&gt;3)-beta-D-GalNAc-(1-&gt;4)-beta-D-GlcA-(1-&gt;3)-beta-D-Gal-(1-&gt;3)-beta-D-Gal-(1-&gt;4)-beta-D-Xyl)-L-seryl-[protein] + UDP + H(+). It carries out the reaction 3-O-{beta-D-GlcA-(1-&gt;3)-[beta-D-GalNAc-(1-&gt;4)-beta-D-GlcA-(1-&gt;3)](n)-beta-D-GalNAc-(1-&gt;4)-beta-D-GlcA-(1-&gt;3)-beta-D-Gal-(1-&gt;3)-beta-D-Gal-(1-&gt;4)-beta-D-Xyl}-L-seryl-[protein] + UDP-N-acetyl-alpha-D-galactosamine = 3-O-{[beta-D-GalNAc-(1-&gt;4)-beta-D-GlcA-(1-&gt;3)](n+1)-beta-D-GalNAc-(1-&gt;4)-beta-D-GlcA-(1-&gt;3)-beta-D-Gal-(1-&gt;3)-beta-D-Gal-(1-&gt;4)-beta-D-Xyl}-L-seryl-[protein] + UDP + H(+). The catalysed reaction is 3-O-(beta-D-GalNAc-(1-&gt;4)-beta-D-GlcA-(1-&gt;3)-beta-D-Gal-(1-&gt;3)-beta-D-Gal-(1-&gt;4)-beta-D-Xyl)-L-seryl-[protein] + UDP-alpha-D-glucuronate = 3-O-(beta-D-GlcA-(1-&gt;3)-beta-D-GalNAc-(1-&gt;4)-beta-D-GlcA-(1-&gt;3)-beta-D-Gal-(1-&gt;3)-beta-D-Gal-(1-&gt;4)-beta-D-Xyl)-L-seryl-[protein] + UDP + H(+). The enzyme catalyses 3-O-{[beta-D-GalNAc-(1-&gt;4)-beta-D-GlcA-(1-&gt;3)](n)-beta-D-GalNAc-(1-&gt;4)-beta-D-GlcA-(1-&gt;3)-beta-D-Gal-(1-&gt;3)-beta-D-Gal-(1-&gt;4)-beta-D-Xyl}-L-seryl-[protein] + UDP-alpha-D-glucuronate = 3-O-{beta-D-GlcA-(1-&gt;3)-[beta-D-GalNAc-(1-&gt;4)-beta-D-GlcA-(1-&gt;3)](n)-beta-D-GalNAc-(1-&gt;4)-beta-D-GlcA-(1-&gt;3)-beta-D-Gal-(1-&gt;3)-beta-D-Gal-(1-&gt;4)-beta-D-Xyl}-L-seryl-[protein] + UDP + H(+). Glycosyltransferase that catalyzes elongation of chondroitin, a polysaccharide composed of a repeating disaccharide of N-acetylgalactosamine (GalNAc) and glucuronic acid (GlcUA) units, by alternatively transferring the GlcUA and GalNAc moiety from UDP-GlcUA and UDP-GalNAc to the non-reducing ends of the chondroitin chain. Each chondroitin unit has the composition beta-(1-&gt;4)-GlcUA-beta-(1-&gt;3)-GalNAc. The protein is Chondroitin synthase (kfoC) of Escherichia coli.